Consider the following 403-residue polypeptide: Bifunctional enzyme IspD/IspF (403 aa).

The tract at residues 1 to 234 is 2-C-methyl-D-erythritol 4-phosphate cytidylyltransferase; it reads MPTSKRTAAI…ARLAAMLGDI (234 aa). The 2-C-methyl-D-erythritol 2,4-cyclodiphosphate synthase stretch occupies residues 235–403; the sequence is RTGTGYDVHA…SDQEDKGWST (169 aa). D241 and H243 together coordinate a divalent metal cation. Residues 241 to 243 and 267 to 268 contribute to the 4-CDP-2-C-methyl-D-erythritol 2-phosphate site; these read DVH and HS. H275 provides a ligand contact to a divalent metal cation. Residues 289 to 291, 365 to 368, F372, and R375 each bind 4-CDP-2-C-methyl-D-erythritol 2-phosphate; these read DIG and TTSE.

The protein in the N-terminal section; belongs to the IspD/TarI cytidylyltransferase family. IspD subfamily. In the C-terminal section; belongs to the IspF family. The cofactor is a divalent metal cation.

The enzyme catalyses 2-C-methyl-D-erythritol 4-phosphate + CTP + H(+) = 4-CDP-2-C-methyl-D-erythritol + diphosphate. It carries out the reaction 4-CDP-2-C-methyl-D-erythritol 2-phosphate = 2-C-methyl-D-erythritol 2,4-cyclic diphosphate + CMP. It participates in isoprenoid biosynthesis; isopentenyl diphosphate biosynthesis via DXP pathway; isopentenyl diphosphate from 1-deoxy-D-xylulose 5-phosphate: step 2/6. It functions in the pathway isoprenoid biosynthesis; isopentenyl diphosphate biosynthesis via DXP pathway; isopentenyl diphosphate from 1-deoxy-D-xylulose 5-phosphate: step 4/6. In terms of biological role, bifunctional enzyme that catalyzes the formation of 4-diphosphocytidyl-2-C-methyl-D-erythritol from CTP and 2-C-methyl-D-erythritol 4-phosphate (MEP) (IspD), and catalyzes the conversion of 4-diphosphocytidyl-2-C-methyl-D-erythritol 2-phosphate (CDP-ME2P) to 2-C-methyl-D-erythritol 2,4-cyclodiphosphate (ME-CPP) with a corresponding release of cytidine 5-monophosphate (CMP) (IspF). The protein is Bifunctional enzyme IspD/IspF of Nitrobacter hamburgensis (strain DSM 10229 / NCIMB 13809 / X14).